The chain runs to 343 residues: Isopentenyl-diphosphate delta-isomerase (343 aa).

Substrate is bound at residue 9–10 (RK). FMN contacts are provided by residues serine 66, 67–69 (SMT), serine 98, and asparagine 126. 98–100 (SQR) contributes to the substrate binding site. Substrate is bound at residue glutamine 161. Glutamate 162 contacts Mg(2+). FMN contacts are provided by residues lysine 193, threonine 223, 273-275 (GIR), and 294-295 (AA).

The protein belongs to the IPP isomerase type 2 family. In terms of assembly, homooctamer. Dimer of tetramers. FMN is required as a cofactor. The cofactor is NADPH. Mg(2+) serves as cofactor.

The protein localises to the cytoplasm. It carries out the reaction isopentenyl diphosphate = dimethylallyl diphosphate. In terms of biological role, involved in the biosynthesis of isoprenoids. Catalyzes the 1,3-allylic rearrangement of the homoallylic substrate isopentenyl (IPP) to its allylic isomer, dimethylallyl diphosphate (DMAPP). The polypeptide is Isopentenyl-diphosphate delta-isomerase (Hydrogenovibrio crunogenus (strain DSM 25203 / XCL-2) (Thiomicrospira crunogena)).